The following is a 589-amino-acid chain: MITRLSELFLRTLREDPADAEVPSHKLLVRAGYVRRVAPGVYTWLPLGLRAMRKIEDVIRQEMNAIGGQEMLFPALLPREPYEESNRWTEYGDNLFRLKDRKGADMLLGPTHEEMFTTAVKDMYSSYKDFPVTLYQIQTKYRDEERPRAGVLRGREFTMKDSYSFDMTDEGLDESYARHRKAYQNIFDRLEIDYAICKATSGAMGGSASEEFLAVSEVGEDTFVRATEGEYAANVEAVVTQAPEEISFEGLPEAQEHETPKSETIESLVEWAKGAGITVDGREVTAADTLKCMMIKVAAPAATEEEKEWELAAVLIPGDRALDEKRLEASLEPAEFELAGEGDFKKNSFLVKGYVGPRVLNAHDVKVYADPRVVSGTSWITGADAPQRHVVGLVAGRDFTVDEFIEAAEVKEGDPAPNGQGTLTLERGIELGHIFQLGRKYTEAFDVQILDENGKRAVPTMGSYGIGVTRMLAVLAEQRHDEKGLNWPVAVAPYQVHVAVANKDAAALEAGQKLVEDLDRAGIEVLYDDRPKVSPGVKFKDAELLGMPFIAILGRAFADGIIELRIRGGETREVPADSIVDTLTELIRG.

It belongs to the class-II aminoacyl-tRNA synthetase family. ProS type 1 subfamily. In terms of assembly, homodimer.

The protein resides in the cytoplasm. It carries out the reaction tRNA(Pro) + L-proline + ATP = L-prolyl-tRNA(Pro) + AMP + diphosphate. Functionally, catalyzes the attachment of proline to tRNA(Pro) in a two-step reaction: proline is first activated by ATP to form Pro-AMP and then transferred to the acceptor end of tRNA(Pro). As ProRS can inadvertently accommodate and process non-cognate amino acids such as alanine and cysteine, to avoid such errors it has two additional distinct editing activities against alanine. One activity is designated as 'pretransfer' editing and involves the tRNA(Pro)-independent hydrolysis of activated Ala-AMP. The other activity is designated 'posttransfer' editing and involves deacylation of mischarged Ala-tRNA(Pro). The misacylated Cys-tRNA(Pro) is not edited by ProRS. This Corynebacterium aurimucosum (strain ATCC 700975 / DSM 44827 / CIP 107346 / CN-1) (Corynebacterium nigricans) protein is Proline--tRNA ligase.